A 533-amino-acid chain; its full sequence is UDP-glucuronosyltransferase 1-2 (533 aa).

The signal sequence occupies residues 1 to 27 (MDTGLCAPLRGLSGLLLLLCALPWAEG). N-linked (GlcNAc...) asparagine glycosylation is found at N133, N141, N295, and N433. The helical transmembrane segment at 491–507 (VIGFLLAIVLTVVFIVY) threads the bilayer.

It belongs to the UDP-glycosyltransferase family.

The protein localises to the microsome. Its subcellular location is the endoplasmic reticulum membrane. The catalysed reaction is glucuronate acceptor + UDP-alpha-D-glucuronate = acceptor beta-D-glucuronoside + UDP + H(+). In terms of biological role, UDPGT is of major importance in the conjugation and subsequent elimination of potentially toxic xenobiotics and endogenous compounds. This chain is UDP-glucuronosyltransferase 1-2 (Ugt1a2), found in Rattus norvegicus (Rat).